We begin with the raw amino-acid sequence, 375 residues long: DnaJ homolog subfamily B member 12 (375 aa).

The residue at position 1 (Met-1) is an N-acetylmethionine. Over 1–243 the chain is Cytoplasmic; the sequence is MESNKDEAER…DRRDNQGDGG (243 aa). Residues 45–92 are disordered; the sequence is ALIESLNQKPQTAGDQPPPTDTTHATHRKAGGTDAPSANGEAGGESTK. Polar residues predominate over residues 49-58; it reads SLNQKPQTAG. The region spanning 112-176 is the J domain; that stretch reads YEILGVSRGA…RKQYDQFGDD (65 aa). Residue His-185 is modified to Pros-methylhistidine. A helical transmembrane segment spans residues 244–264; that stretch reads LGVFVQLMPILILILVSALSQ. The Lumenal portion of the chain corresponds to 265–375; that stretch reads LMVSSPPYSL…LSEVQASLHG (111 aa).

It belongs to the DnaJ family. DNAJB12/DNAJB14 subfamily. In terms of assembly, homodimer and homotetramer. Interacts (via J domain) with HSPA8/Hsc70. Forms a multiprotein complex, at least composed of DNAJB12, DNAJB14, HSPA8/Hsc70 and SGTA; interaction with DNAJB14 and HSPA8/Hsc70 is direct. Post-translationally, methylated at His-185 by METTL9.

The protein localises to the endoplasmic reticulum membrane. The protein resides in the nucleus membrane. Acts as a co-chaperone with HSPA8/Hsc70; required to promote protein folding and trafficking, prevent aggregation of client proteins, and promote unfolded proteins to endoplasmic reticulum-associated degradation (ERAD) pathway. Acts by determining HSPA8/Hsc70's ATPase and polypeptide-binding activities. Can also act independently of HSPA8/Hsc70: together with DNAJB14, acts as a chaperone that promotes maturation of potassium channels KCND2 and KCNH2 by stabilizing nascent channel subunits and assembling them into tetramers. While stabilization of nascent channel proteins is dependent on HSPA8/Hsc70, the process of oligomerization of channel subunits is independent of HSPA8/Hsc70. When overexpressed, forms membranous structures together with DNAJB14 and HSPA8/Hsc70 within the nucleus; the role of these structures, named DJANGOs, is still unclear. In terms of biological role, (Microbial infection) In case of infection by polyomavirus, involved in the virus endoplasmic reticulum membrane penetration and infection. The polypeptide is DnaJ homolog subfamily B member 12 (Homo sapiens (Human)).